The sequence spans 212 residues: Uracil phosphoribosyltransferase (212 aa).

5-phospho-alpha-D-ribose 1-diphosphate-binding positions include arginine 78, arginine 103, and 130 to 138; that span reads DPMLATGGS. Residues isoleucine 193 and 198-200 contribute to the uracil site; that span reads GDA. 5-phospho-alpha-D-ribose 1-diphosphate is bound at residue aspartate 199.

This sequence belongs to the UPRTase family. Mg(2+) is required as a cofactor.

The catalysed reaction is UMP + diphosphate = 5-phospho-alpha-D-ribose 1-diphosphate + uracil. It functions in the pathway pyrimidine metabolism; UMP biosynthesis via salvage pathway; UMP from uracil: step 1/1. With respect to regulation, allosterically activated by GTP. In terms of biological role, catalyzes the conversion of uracil and 5-phospho-alpha-D-ribose 1-diphosphate (PRPP) to UMP and diphosphate. The protein is Uracil phosphoribosyltransferase of Pseudomonas paraeruginosa (strain DSM 24068 / PA7) (Pseudomonas aeruginosa (strain PA7)).